Consider the following 383-residue polypeptide: MMLLKRCNRRALVALAAVLLLAACGGARELPDLSDVGDGVATETLWTASTGSGSASSAYALVPAVEGGRVYAADSNGRVTAWDAESGERLWRVDTGRELAAGPGAGGGLVLVGARDGRLLALDAENGEERWVSGLSSEILAVPQIARNIVVARSGDGRVYGLDGLTGRRLWIHDRSVPVLTLRGSSSPVVVGNRVVVGQDNGRLVTLNLQDGEVIWEAPVSIPRGRSDLERMVDLHADPLVFRGVAYAQAYQGELAAVGMGDGRERWSRDIPGHTGMAADSRQLYVVDDQSRLWALDRNNGATVWRQDRLQGLRLTAPVVIGGHLVLADEEGYLNWIAPDNGDLVGRDRHGRQPIQRPPVPDGDVLYLLSADGRLAALRLVED.

A signal peptide spans 1–23 (MMLLKRCNRRALVALAAVLLLAA). Cysteine 24 is lipidated: N-palmitoyl cysteine. Cysteine 24 carries the S-diacylglycerol cysteine lipid modification.

It belongs to the BamB family. Part of the Bam complex.

The protein resides in the cell outer membrane. Functionally, part of the outer membrane protein assembly complex, which is involved in assembly and insertion of beta-barrel proteins into the outer membrane. The sequence is that of Outer membrane protein assembly factor BamB from Alkalilimnicola ehrlichii (strain ATCC BAA-1101 / DSM 17681 / MLHE-1).